Here is a 631-residue protein sequence, read N- to C-terminus: Phosphomethylpyrimidine synthase (631 aa).

Residues Asn-239, Met-268, Tyr-297, His-333, 353 to 355, 394 to 397, and Glu-433 contribute to the substrate site; these read SRG and DGLR. His-437 lines the Zn(2+) pocket. Tyr-460 contributes to the substrate binding site. Residue His-501 coordinates Zn(2+). Residues Cys-581, Cys-584, and Cys-589 each coordinate [4Fe-4S] cluster.

The protein belongs to the ThiC family. Homodimer. Requires [4Fe-4S] cluster as cofactor.

The catalysed reaction is 5-amino-1-(5-phospho-beta-D-ribosyl)imidazole + S-adenosyl-L-methionine = 4-amino-2-methyl-5-(phosphooxymethyl)pyrimidine + CO + 5'-deoxyadenosine + formate + L-methionine + 3 H(+). It participates in cofactor biosynthesis; thiamine diphosphate biosynthesis. In terms of biological role, catalyzes the synthesis of the hydroxymethylpyrimidine phosphate (HMP-P) moiety of thiamine from aminoimidazole ribotide (AIR) in a radical S-adenosyl-L-methionine (SAM)-dependent reaction. This Escherichia coli O6:K15:H31 (strain 536 / UPEC) protein is Phosphomethylpyrimidine synthase.